The following is a 542-amino-acid chain: Phosphoenolpyruvate carboxykinase (ATP) (542 aa).

Positions 67, 208, and 214 each coordinate substrate. Residues K214, H233, and G249–T257 each bind ATP. 2 residues coordinate Mn(2+): K214 and H233. Residue D270 participates in Mn(2+) binding. Residues E298, R334, R450–I451, and T456 each bind ATP. R334 is a substrate binding site.

The protein belongs to the phosphoenolpyruvate carboxykinase (ATP) family. Monomer. The cofactor is Mn(2+).

The protein resides in the cytoplasm. It catalyses the reaction oxaloacetate + ATP = phosphoenolpyruvate + ADP + CO2. It functions in the pathway carbohydrate biosynthesis; gluconeogenesis. Involved in the gluconeogenesis. Catalyzes the conversion of oxaloacetate (OAA) to phosphoenolpyruvate (PEP) through direct phosphoryl transfer between the nucleoside triphosphate and OAA. The polypeptide is Phosphoenolpyruvate carboxykinase (ATP) (Vibrio cholerae serotype O1 (strain ATCC 39541 / Classical Ogawa 395 / O395)).